Here is a 97-residue protein sequence, read N- to C-terminus: MKIIKDALAGTLESSDVMIRIGPSSEPGIRLELESLVKQQFGAAIEQVVRETLAKLGVERALVSVDDKGALECILRARVQAAALRAAEQTEIQWSAL.

Serine 14 is modified (O-(phosphoribosyl dephospho-coenzyme A)serine).

It belongs to the CitD family. As to quaternary structure, oligomer with a subunit composition of (alpha,beta,gamma)6.

The protein resides in the cytoplasm. Its function is as follows. Covalent carrier of the coenzyme of citrate lyase. The polypeptide is Citrate lyase acyl carrier protein 2 (Salmonella paratyphi A (strain ATCC 9150 / SARB42)).